The following is a 198-amino-acid chain: Clytin (198 aa).

The propeptide occupies 1-9 (MADTASKYA). 4 consecutive EF-hand domains span residues 20–55 (KWVN…DICA), 60–95 (TPEQ…VDGW), 119–148 (EAVF…SGIC), and 149–184 (SSDE…FWYT). The Ca(2+) site is built by Asp-33, Asn-35, Asp-37, Lys-39, and Glu-44. The Ca(2+) site is built by Asp-126, Asp-128, Ser-130, Ser-132, Glu-137, Asp-162, Asp-164, Ser-166, Lys-168, and Glu-173.

This sequence belongs to the aequorin family.

Ca(2+)-dependent bioluminescence photoprotein. Displays an emission peak at 470 nm (blue light). Trace amounts of calcium ion trigger the intramolecular oxidation of the chromophore, coelenterazine into coelenteramide and CO(2) with the concomitant emission of light. The sequence is that of Clytin from Clytia gregaria (Gregarious jellyfish).